Here is a 423-residue protein sequence, read N- to C-terminus: Gamma-glutamyl phosphate reductase (423 aa).

The segment covering 1–14 (MTLQAAPRSAAAQQ) has biased composition (low complexity). A disordered region spans residues 1-25 (MTLQAAPRSAAAQQREPDLRQEVHD). Basic and acidic residues predominate over residues 15–25 (REPDLRQEVHD).

The protein belongs to the gamma-glutamyl phosphate reductase family.

It localises to the cytoplasm. It carries out the reaction L-glutamate 5-semialdehyde + phosphate + NADP(+) = L-glutamyl 5-phosphate + NADPH + H(+). It functions in the pathway amino-acid biosynthesis; L-proline biosynthesis; L-glutamate 5-semialdehyde from L-glutamate: step 2/2. In terms of biological role, catalyzes the NADPH-dependent reduction of L-glutamate 5-phosphate into L-glutamate 5-semialdehyde and phosphate. The product spontaneously undergoes cyclization to form 1-pyrroline-5-carboxylate. This Mycobacterium marinum (strain ATCC BAA-535 / M) protein is Gamma-glutamyl phosphate reductase.